The chain runs to 347 residues: MAKSLSYADAGVDIDKANRLVDRIKTIVKSTPRQGVIGGIGGFGGLFSLNTEQYERPVLVSSTDGVGTKLRVAIMMDKHDTIGIDLVAMSVNDILVQGAKPLFFLDYLSMGKLNENTAADIIEGVAEGCRQANCALIGGETAEMPGMYEDGDYDLAGFAVGIADNFKIVDGSDVGQGNVLLGIASTGLHSNGYSLARKVFFDHLGLKVDSYVEDLGMTVGEAMLEPTKIYAEIVRNLIRDIHVNGMAHITGGGIIDNLPRTIPQSCKAIIREGSWEYPAIFPFMKKAGDIDEMEMMRTFNNGIGLVAVIPEPQVQEALELMQAMGEKAYVIGEIAARGENDDRIEWK.

It belongs to the AIR synthase family.

It localises to the cytoplasm. It catalyses the reaction 2-formamido-N(1)-(5-O-phospho-beta-D-ribosyl)acetamidine + ATP = 5-amino-1-(5-phospho-beta-D-ribosyl)imidazole + ADP + phosphate + H(+). It participates in purine metabolism; IMP biosynthesis via de novo pathway; 5-amino-1-(5-phospho-D-ribosyl)imidazole from N(2)-formyl-N(1)-(5-phospho-D-ribosyl)glycinamide: step 2/2. In Desulfatibacillum aliphaticivorans, this protein is Phosphoribosylformylglycinamidine cyclo-ligase.